A 323-amino-acid chain; its full sequence is Ribonuclease Z (323 aa).

Positions 62, 64, 66, 67, 144, 215, and 273 each coordinate Zn(2+). Aspartate 66 acts as the Proton acceptor in catalysis.

This sequence belongs to the RNase Z family. In terms of assembly, homodimer. Requires Zn(2+) as cofactor.

It catalyses the reaction Endonucleolytic cleavage of RNA, removing extra 3' nucleotides from tRNA precursor, generating 3' termini of tRNAs. A 3'-hydroxy group is left at the tRNA terminus and a 5'-phosphoryl group is left at the trailer molecule.. In terms of biological role, zinc phosphodiesterase, which displays some tRNA 3'-processing endonuclease activity. Probably involved in tRNA maturation, by removing a 3'-trailer from precursor tRNA. The polypeptide is Ribonuclease Z (Synechococcus sp. (strain WH7803)).